Reading from the N-terminus, the 602-residue chain is mRNA-capping enzyme subunit beta (602 aa).

A disordered region spans residues 1 to 249 (MSEHHSKRAL…NESNSEETHD (249 aa)). Residues 15-42 (LVNHDENDKSKLQKLADNESSVRSDDNR) are compositionally biased toward basic and acidic residues. Residues 48-64 (NIVNGNNSNSDLNSNGV) show a composition bias toward low complexity. A compositionally biased stretch (acidic residues) spans 65–76 (IEEDTDTDDDVG). A compositionally biased stretch (basic and acidic residues) spans 88–110 (DYDKQDRFSPEKKRIQARKKDTS). Positions 114 to 128 (PSISNESPSNSKESS) are enriched in low complexity. Positions 141–169 (TDRKDSSEEKPDLTGPELVKEPDTNEYKR) are enriched in basic and acidic residues. Positions 171–181 (SIQSITNAEDT) are enriched in polar residues. Composition is skewed to basic and acidic residues over residues 213–222 (TEEHKPKTET) and 231–249 (QENK…ETHD). K276 functions as the N6-GMP-lysine intermediate in the catalytic mechanism.

It belongs to the fungal TPase family. In terms of assembly, heterodimer. The mRNA-capping enzyme is composed of two separate chains alpha and beta, respectively a mRNA guanylyltransferase and an mRNA 5'-triphosphate monophosphatase. It depends on Mg(2+) as a cofactor.

The protein resides in the nucleus. The catalysed reaction is a 5'-end triphospho-ribonucleoside in mRNA + H2O = a 5'-end diphospho-ribonucleoside in mRNA + phosphate + H(+). First step of mRNA capping. Converts the 5'-triphosphate end of a nascent mRNA chain into a diphosphate end. In Candida glabrata (strain ATCC 2001 / BCRC 20586 / JCM 3761 / NBRC 0622 / NRRL Y-65 / CBS 138) (Yeast), this protein is mRNA-capping enzyme subunit beta (CET1).